The primary structure comprises 146 residues: Gonadotropin subunit beta-2 (146 aa).

Positions 1 to 22 are cleaved as a signal peptide; that stretch reads MTVEISKVFVLMMLNLFLGASS. 6 disulfides stabilise this stretch: cysteine 37/cysteine 85, cysteine 51/cysteine 100, cysteine 54/cysteine 138, cysteine 62/cysteine 116, cysteine 66/cysteine 118, and cysteine 121/cysteine 128. N-linked (GlcNAc...) asparagine glycosylation is present at asparagine 41.

It belongs to the glycoprotein hormones subunit beta family. In terms of assembly, heterodimer of an alpha and a beta chain.

It is found in the secreted. Involved in gametogenesis and steroidogenesis. The polypeptide is Gonadotropin subunit beta-2 (cgbb) (Trichopodus trichopterus (Three spot gourami)).